The sequence spans 314 residues: Dihydroorotate dehydrogenase (fumarate) (314 aa).

Residues lysine 46, 70–74 (NSMGL), and asparagine 130 contribute to the substrate site. Position 46–47 (46–47 (KS)) interacts with FMN. Residue asparagine 130 coordinates FMN. Catalysis depends on nucleophile residues serine 132 and cysteine 133. FMN is bound by residues lysine 167 and isoleucine 195. 196–197 (NS) is a binding site for substrate. Residues glycine 224, 252–253 (GG), and 274–275 (GT) contribute to the FMN site.

The protein belongs to the dihydroorotate dehydrogenase family. Type 1 subfamily. As to quaternary structure, homodimer. Requires FMN as cofactor.

Its subcellular location is the cytoplasm. The enzyme catalyses (S)-dihydroorotate + fumarate = orotate + succinate. It participates in pyrimidine metabolism; UMP biosynthesis via de novo pathway. The activity is independent of the presence of oxygen. Its function is as follows. Catalyzes the conversion of dihydroorotate to orotate with fumarate as the electron acceptor. The protein is Dihydroorotate dehydrogenase (fumarate) (URA1) of Lachancea kluyveri (strain ATCC 58438 / CBS 3082 / BCRC 21498 / NBRC 1685 / JCM 7257 / NCYC 543 / NRRL Y-12651) (Yeast).